The sequence spans 105 residues: uncharacterized protein (105 aa).

This sequence belongs to the asfivirus C122R family.

It localises to the virion. This is an uncharacterized protein from African swine fever virus (strain Badajoz 1971 Vero-adapted) (Ba71V).